An 89-amino-acid polypeptide reads, in one-letter code: Small ribosomal subunit protein uS15 (89 aa).

The protein belongs to the universal ribosomal protein uS15 family. As to quaternary structure, part of the 30S ribosomal subunit. Forms a bridge to the 50S subunit in the 70S ribosome, contacting the 23S rRNA.

Its function is as follows. One of the primary rRNA binding proteins, it binds directly to 16S rRNA where it helps nucleate assembly of the platform of the 30S subunit by binding and bridging several RNA helices of the 16S rRNA. In terms of biological role, forms an intersubunit bridge (bridge B4) with the 23S rRNA of the 50S subunit in the ribosome. The chain is Small ribosomal subunit protein uS15 from Sinorhizobium medicae (strain WSM419) (Ensifer medicae).